Here is a 407-residue protein sequence, read N- to C-terminus: Elongation factor Tu, chloroplastic (407 aa).

The tr-type G domain maps to 10–212 (KPHVNIGTIG…SVDNYIPAPE (203 aa)). Residues 19–26 (GHVDHGKT) form a G1 region. Residue 19–26 (GHVDHGKT) participates in GTP binding. T26 provides a ligand contact to Mg(2+). Positions 59–63 (GITIN) are G2. Residues 80–83 (DCPG) are G3. GTP contacts are provided by residues 80–84 (DCPGH) and 135–138 (NKAD). The tract at residues 135–138 (NKAD) is G4. Residues 173-175 (SAL) are G5.

This sequence belongs to the TRAFAC class translation factor GTPase superfamily. Classic translation factor GTPase family. EF-Tu/EF-1A subfamily.

Its subcellular location is the plastid. The protein localises to the chloroplast. It carries out the reaction GTP + H2O = GDP + phosphate + H(+). In terms of biological role, GTP hydrolase that promotes the GTP-dependent binding of aminoacyl-tRNA to the A-site of ribosomes during protein biosynthesis. The protein is Elongation factor Tu, chloroplastic (tufA) of Emiliania huxleyi (Coccolithophore).